The chain runs to 785 residues: Leucyl aminopeptidase (785 aa).

Substrate contacts are provided by residues Glu106 and 238-242; that span reads GAMEN. Residue His273 participates in Zn(2+) binding. Catalysis depends on Glu274, which acts as the Proton acceptor. Zn(2+) contacts are provided by His277 and Glu296.

It belongs to the peptidase M1 family. In terms of assembly, co-immunoprecipitates with the 60 kDa chaperonin. It depends on Zn(2+) as a cofactor. In terms of processing, can be phosphorylated by cell extracts.

The protein localises to the cytoplasm. It carries out the reaction Release of an N-terminal amino acid, Xaa-|-Yaa-, in which Xaa is preferably Leu, but may be other amino acids including Pro although not Arg or Lys, and Yaa may be Pro. Amino acid amides and methyl esters are also readily hydrolyzed, but rates on arylamides are exceedingly low.. Its function is as follows. Preferentially acts as a leucyl-aminopeptidase, although it also has activity against other substrates. This chain is Leucyl aminopeptidase (ape2), found in Saccharolobus solfataricus (strain ATCC 35092 / DSM 1617 / JCM 11322 / P2) (Sulfolobus solfataricus).